Reading from the N-terminus, the 163-residue chain is 6,7-dimethyl-8-ribityllumazine synthase (163 aa).

5-amino-6-(D-ribitylamino)uracil-binding positions include phenylalanine 27, 58-60 (ALE), and 87-89 (CVV). 92-93 (DT) contacts (2S)-2-hydroxy-3-oxobutyl phosphate. Catalysis depends on histidine 95, which acts as the Proton donor. Residue asparagine 120 coordinates 5-amino-6-(D-ribitylamino)uracil. Arginine 134 contacts (2S)-2-hydroxy-3-oxobutyl phosphate.

Belongs to the DMRL synthase family.

The enzyme catalyses (2S)-2-hydroxy-3-oxobutyl phosphate + 5-amino-6-(D-ribitylamino)uracil = 6,7-dimethyl-8-(1-D-ribityl)lumazine + phosphate + 2 H2O + H(+). Its pathway is cofactor biosynthesis; riboflavin biosynthesis; riboflavin from 2-hydroxy-3-oxobutyl phosphate and 5-amino-6-(D-ribitylamino)uracil: step 1/2. Its function is as follows. Catalyzes the formation of 6,7-dimethyl-8-ribityllumazine by condensation of 5-amino-6-(D-ribitylamino)uracil with 3,4-dihydroxy-2-butanone 4-phosphate. This is the penultimate step in the biosynthesis of riboflavin. In Nitrobacter hamburgensis (strain DSM 10229 / NCIMB 13809 / X14), this protein is 6,7-dimethyl-8-ribityllumazine synthase.